Here is a 99-residue protein sequence, read N- to C-terminus: Fetal and adult testis-expressed transcript protein homolog (99 aa).

A helical membrane pass occupies residues 79-98 (AALFTLLVSVCIANLWLWVH).

As to quaternary structure, interacts with BIK and RNF183. Interacts with IMMT/MIC60and EMD.

Its subcellular location is the mitochondrion. The protein resides in the mitochondrion outer membrane. It is found in the endoplasmic reticulum membrane. Its function is as follows. Involved in the regulation of endoplasmic reticulum (ER)-mitochondria coupling. Negatively regulates the ER-mitochondria distance and Ca(2+) transfer from ER to mitochondria possibly implicating it in the regulation of apoptosis. May collaborate with RNF183 to restrain BIK protein levels thus regulating apoptotic signaling. The chain is Fetal and adult testis-expressed transcript protein homolog (Fate1) from Mus musculus (Mouse).